We begin with the raw amino-acid sequence, 209 residues long: Ribosomal RNA small subunit methyltransferase G (209 aa).

Residues G77, M82, 128-129 (VE), and R143 each bind S-adenosyl-L-methionine.

It belongs to the methyltransferase superfamily. RNA methyltransferase RsmG family.

The protein resides in the cytoplasm. It carries out the reaction guanosine(527) in 16S rRNA + S-adenosyl-L-methionine = N(7)-methylguanosine(527) in 16S rRNA + S-adenosyl-L-homocysteine. Specifically methylates the N7 position of guanine in position 527 of 16S rRNA. The polypeptide is Ribosomal RNA small subunit methyltransferase G (Chromobacterium violaceum (strain ATCC 12472 / DSM 30191 / JCM 1249 / CCUG 213 / NBRC 12614 / NCIMB 9131 / NCTC 9757 / MK)).